The primary structure comprises 139 residues: uncharacterized protein (139 aa).

This sequence to M.tuberculosis Rv2798c.

This is an uncharacterized protein from Mycobacterium tuberculosis (strain CDC 1551 / Oshkosh).